Reading from the N-terminus, the 373-residue chain is Chaperone protein DnaJ (373 aa).

Residues 5-71 form the J domain; it reads DYYEILGVSR…EKRAMYDKFG (67 aa). The CR-type zinc-finger motif lies at 144–226; sequence GVKIPLEYDR…CGGTGRIRKR (83 aa). Residues Cys157, Cys160, Cys174, Cys177, Cys200, Cys203, Cys214, and Cys217 each contribute to the Zn(2+) site. CXXCXGXG motif repeat units follow at residues 157 to 164, 174 to 181, 200 to 207, and 214 to 221; these read CEHCHGEG, CPKCHGTG, CNQCGGTG, and CRVCGGTG.

It belongs to the DnaJ family. In terms of assembly, homodimer. It depends on Zn(2+) as a cofactor.

It is found in the cytoplasm. Its function is as follows. Participates actively in the response to hyperosmotic and heat shock by preventing the aggregation of stress-denatured proteins and by disaggregating proteins, also in an autonomous, DnaK-independent fashion. Unfolded proteins bind initially to DnaJ; upon interaction with the DnaJ-bound protein, DnaK hydrolyzes its bound ATP, resulting in the formation of a stable complex. GrpE releases ADP from DnaK; ATP binding to DnaK triggers the release of the substrate protein, thus completing the reaction cycle. Several rounds of ATP-dependent interactions between DnaJ, DnaK and GrpE are required for fully efficient folding. Also involved, together with DnaK and GrpE, in the DNA replication of plasmids through activation of initiation proteins. This is Chaperone protein DnaJ from Thermosipho melanesiensis (strain DSM 12029 / CIP 104789 / BI429).